Reading from the N-terminus, the 747-residue chain is Pentatricopeptide repeat-containing protein At5g39710 (747 aa).

PPR repeat units lie at residues 133 to 167, 168 to 203, 204 to 238, 239 to 273, 274 to 308, 309 to 343, 344 to 378, 379 to 413, 414 to 448, 449 to 483, 484 to 518, 519 to 553, 554 to 588, 604 to 638, and 639 to 673; these read TSSVFDLVVKSYSRLSLIDKALSIVHLAQAHGFMP, GVLSYNAVLDATIRSKRNISFAENVFKEMLESQVSP, NVFTYNILIRGFCFAGNIDVALTLFDKMETKGCLP, NVVTYNTLIDGYCKLRKIDDGFKLLRSMALKGLEP, NLISYNVVINGLCREGRMKEVSFVLTEMNRRGYSL, DEVTYNTLIKGYCKEGNFHQALVMHAEMLRHGLTP, SVITYTSLIHSMCKAGNMNRAMEFLDQMRVRGLCP, NERTYTTLVDGFSQKGYMNEAYRVLREMNDNGFSP, SVVTYNALINGHCVTGKMEDAIAVLEDMKEKGLSP, DVVSYSTVLSGFCRSYDVDEALRVKREMVEKGIKP, DTITYSSLIQGFCEQRRTKEACDLYEEMLRVGLPP, DEFTYTALINAYCMEGDLEKALQLHNEMVEKGVLP, DVVTYSVLINGLNKQSRTREAKRLLLKLFYEESVP, EFKSVVSLIKGFCMKGMMTEADQVFESMLGKNHKP, and DGTAYNIMIHGHCRAGDIRKAYTLYKEMVKSGFLL.

It belongs to the PPR family. P subfamily.

This Arabidopsis thaliana (Mouse-ear cress) protein is Pentatricopeptide repeat-containing protein At5g39710 (EMB2745).